The following is a 517-amino-acid chain: Urethanase (517 aa).

Residues K98 and S173 each act as charge relay system in the active site. S197 functions as the Acyl-ester intermediate in the catalytic mechanism.

It belongs to the amidase family. Homooctamer.

The catalysed reaction is urethane + H2O + H(+) = ethanol + NH4(+) + CO2. Exhibits poor salt tolerance but excellent tolerance to low concentrations of ethanol. EDTA has almost no impact on activity. Activity is increased in the presence of Ca(2+), Mg(2+) and Co(3+) and inhibited in the presence of Al(3+), Zn(2+) and Cu(2+). Its function is as follows. Hydrolase that can catalyze the degradation of ethyl carbamate (also called urethane), a probable human carcinogen widely found in alcoholic beverages. Can also use methyl carbamate, butyl carbamate, acetamide and urea. Also catalyzes the enantioselective hydrolysis of 2-phenylpropionamide, alpha-chlorophenylacetamide, 2-methyl-3-phenylpropionamide and alpha-methoxyphenylacetamide to the corresponding acids. Is inactive on benzamide and L-glutamine. In Rhizobium radiobacter (Agrobacterium tumefaciens), this protein is Urethanase.